A 185-amino-acid polypeptide reads, in one-letter code: MEPTITIENIVASTRLAEDFDLQKLLDTGLKGAVYNKNKFPGLVYRIENPKAAFLIFASGKVVCTGTKNVENSRIALFNLANELNSIGYKGIYLKPEIHVQNVVASANLRTSLNLNAVLSAFGVENVEYEPEVFPGLVYKLADPRVVVLVFRTGKLVITGGKCPEDCEEGLRIIKTQLDNLGLLY.

Tandem repeats lie at residues 7-84 (IENI…ANEL) and 100-178 (VQNV…KTQL).

The protein belongs to the TBP family.

Its function is as follows. General factor that plays a role in the activation of archaeal genes transcribed by RNA polymerase. Binds specifically to the TATA box promoter element which lies close to the position of transcription initiation. The protein is TATA-box-binding protein 2 of Methanosarcina acetivorans (strain ATCC 35395 / DSM 2834 / JCM 12185 / C2A).